Reading from the N-terminus, the 307-residue chain is Recombination-associated protein RdgC (307 aa).

The protein belongs to the RdgC family.

The protein resides in the cytoplasm. It localises to the nucleoid. In terms of biological role, may be involved in recombination. The chain is Recombination-associated protein RdgC from Colwellia psychrerythraea (strain 34H / ATCC BAA-681) (Vibrio psychroerythus).